The following is a 324-amino-acid chain: O-ureido-L-serine synthase (324 aa).

Lys43 is subject to N6-(pyridoxal phosphate)lysine. Pyridoxal 5'-phosphate is bound by residues Asn73, 177–181 (GTTGT), and Ser265.

The protein belongs to the cysteine synthase/cystathionine beta-synthase family. Homotetramer. It depends on pyridoxal 5'-phosphate as a cofactor.

It catalyses the reaction hydroxyurea + O-acetyl-L-serine = O-ureido-L-serine + acetate + H(+). It carries out the reaction O-acetyl-L-serine + hydrogen sulfide = L-cysteine + acetate. Involved in the biosynthesis of the antibiotic D-cycloserine (DCS), a cyclic structural analog of D-alanine, used as an antitubercular agent. Catalyzes the addition of hydroxyurea on O-acetyl-L-serine (OAS) to yield O-ureido-L-serine. It prefers sulfide as the second substrate, followed by hydroxyurea, L-homocysteine, and thiosulfate. In Streptomyces lavendulae, this protein is O-ureido-L-serine synthase.